A 208-amino-acid polypeptide reads, in one-letter code: N-(5'-phosphoribosyl)anthranilate isomerase (208 aa).

The protein belongs to the TrpF family.

The catalysed reaction is N-(5-phospho-beta-D-ribosyl)anthranilate = 1-(2-carboxyphenylamino)-1-deoxy-D-ribulose 5-phosphate. Its pathway is amino-acid biosynthesis; L-tryptophan biosynthesis; L-tryptophan from chorismate: step 3/5. In Deinococcus radiodurans (strain ATCC 13939 / DSM 20539 / JCM 16871 / CCUG 27074 / LMG 4051 / NBRC 15346 / NCIMB 9279 / VKM B-1422 / R1), this protein is N-(5'-phosphoribosyl)anthranilate isomerase.